Reading from the N-terminus, the 201-residue chain is UPF0301 protein Rleg2_0617 (201 aa).

Belongs to the UPF0301 (AlgH) family.

In Rhizobium leguminosarum bv. trifolii (strain WSM2304), this protein is UPF0301 protein Rleg2_0617.